The primary structure comprises 416 residues: Casein kinase I isoform epsilon (416 aa).

Residues 9-277 (YRLGRKIGSG…YLRQLFRNLF (269 aa)) enclose the Protein kinase domain. ATP-binding positions include 15 to 23 (IGSGSFGDI) and K38. The active-site Proton acceptor is D128. A compositionally biased stretch (basic and acidic residues) spans 301–318 (PEDMDRERREHEREERMG). Residues 301 to 416 (PEDMDRERRE…TSVPFDHLGK (116 aa)) form a disordered region. The span at 324–338 (ATRALPPGPPAGATG) shows a compositional bias: low complexity. 2 stretches are compositionally biased toward polar residues: residues 350 to 365 (STPT…TSPR) and 400 to 409 (SRISASQTSV).

This sequence belongs to the protein kinase superfamily. CK1 Ser/Thr protein kinase family. Casein kinase I subfamily. As to quaternary structure, monomer. Component of the circadian core oscillator, which includes the CRY proteins, CLOCK, or NPAS2, BMAL1 or BMAL2, CSNK1E, and the PER proteins.

It is found in the cytoplasm. The enzyme catalyses L-seryl-[protein] + ATP = O-phospho-L-seryl-[protein] + ADP + H(+). It carries out the reaction L-threonyl-[protein] + ATP = O-phospho-L-threonyl-[protein] + ADP + H(+). Casein kinases are operationally defined by their preferential utilization of acidic proteins such as caseins as substrates. Can phosphorylate a large number of proteins. Participates in Wnt signaling. Phosphorylates DVL1. Central component of the circadian clock. May act as a negative regulator of circadian rhythmicity by phosphorylating PER1 and PER2. Retains PER1 in the cytoplasm. This Gallus gallus (Chicken) protein is Casein kinase I isoform epsilon (CSNK1E).